A 553-amino-acid polypeptide reads, in one-letter code: CTP synthase (553 aa).

The amidoligase domain stretch occupies residues 1-270; the sequence is MTKYVFVTGG…DELICEELKL (270 aa). Residue serine 13 participates in CTP binding. Position 13 (serine 13) interacts with UTP. ATP-binding positions include 14–19 and aspartate 71; that span reads SLGKGI. Residues aspartate 71 and glutamate 144 each coordinate Mg(2+). Residues 151 to 153, 191 to 196, and lysine 227 contribute to the CTP site; these read DIE and KTKPTQ. UTP contacts are provided by residues 191 to 196 and lysine 227; that span reads KTKPTQ. Positions 295–547 constitute a Glutamine amidotransferase type-1 domain; that stretch reads TIGMVGKYVE…VEAARAHHEA (253 aa). Glycine 356 contacts L-glutamine. Cysteine 383 functions as the Nucleophile; for glutamine hydrolysis in the catalytic mechanism. L-glutamine-binding positions include 384-387, glutamate 407, and arginine 473; that span reads LGMQ. Residues histidine 520 and glutamate 522 contribute to the active site.

It belongs to the CTP synthase family. As to quaternary structure, homotetramer.

It catalyses the reaction UTP + L-glutamine + ATP + H2O = CTP + L-glutamate + ADP + phosphate + 2 H(+). It carries out the reaction L-glutamine + H2O = L-glutamate + NH4(+). The catalysed reaction is UTP + NH4(+) + ATP = CTP + ADP + phosphate + 2 H(+). Its pathway is pyrimidine metabolism; CTP biosynthesis via de novo pathway; CTP from UDP: step 2/2. Allosterically activated by GTP, when glutamine is the substrate; GTP has no effect on the reaction when ammonia is the substrate. The allosteric effector GTP functions by stabilizing the protein conformation that binds the tetrahedral intermediate(s) formed during glutamine hydrolysis. Inhibited by the product CTP, via allosteric rather than competitive inhibition. Its function is as follows. Catalyzes the ATP-dependent amination of UTP to CTP with either L-glutamine or ammonia as the source of nitrogen. Regulates intracellular CTP levels through interactions with the four ribonucleotide triphosphates. In Paraburkholderia phymatum (strain DSM 17167 / CIP 108236 / LMG 21445 / STM815) (Burkholderia phymatum), this protein is CTP synthase.